The chain runs to 637 residues: MLKFQEAAKCVSGSTAISTYPKTLIARRYVLQQKLGSGSFGTVYLVSDKKAKRGEELKVLKEISVGELNPNETVQANLEAQLLSKLDHPAIVKFHASFVEQDNFCIITEYCEGRDLDYKIQEYKEAGKIFPDNQIIEWFIQLLLGVDYMHERRILHRDLKSKNIFLKNNLLKIGDFGVSRLLMGSCDLATTLTGTPHYMSPEALKHQGYDTKSDIWSLACILYEMCCMNHAFAGSNFLSIVLKIVEGDTPSLPERYPKELNTIMESMLNKNPSLRPSAIEILKIPYIDEQLQHLMCRHSEMTLEDKNLDCQKEAARLINAMQKRIHLQTLRALSEVQKMTPRERMRLRKLQAADERARKLKKIVEEKYEENSKRMQELRSRNFQQLSVDVLHEKTHLIGMEEKEEQPEGRPSCSPQDEDEERWQDREEEFDEPTLENLSEPQPIPSMDLRKLESIVEDATSDLGYHEIPEDPLVAEEYYADAFDSYCEESDEEEEEIVLAGPEKEIKNEGSQPTYRTNQQDSDIEALARCLENVLGCTSLDTKTIPSMAADVSPGPTIFNSVMARTKMKRMRESAMQKLGTEVFEEVYNYLKRARHQNASEAEIRERLEKVVPRASDCFEVDQLLYFEEQLLITMGK.

Residues 29 to 287 (YVLQQKLGSG…AIEILKIPYI (259 aa)) form the Protein kinase domain. ATP is bound by residues 35 to 43 (LGSGSFGTV) and lysine 61. Catalysis depends on aspartate 158, which acts as the Proton acceptor. Position 273 is a phosphoserine; by CHEK1 (serine 273). A coiled-coil region spans residues 302–385 (TLEDKNLDCQ…QELRSRNFQQ (84 aa)). The interval 399–446 (GMEEKEEQPEGRPSCSPQDEDEERWQDREEEFDEPTLENLSEPQPIPS) is disordered. The segment covering 416 to 434 (QDEDEERWQDREEEFDEPT) has biased composition (acidic residues).

The protein belongs to the protein kinase superfamily. NEK Ser/Thr protein kinase family. NIMA subfamily. In terms of assembly, interacts with NEK2. Mn(2+) serves as cofactor. Mg(2+) is required as a cofactor. Post-translationally, phosphorylated by NEK2. Phosphorylation at Ser-273 is important for its activation.

It is found in the nucleus. Its subcellular location is the nucleolus. The enzyme catalyses L-seryl-[protein] + ATP = O-phospho-L-seryl-[protein] + ADP + H(+). It catalyses the reaction L-threonyl-[protein] + ATP = O-phospho-L-threonyl-[protein] + ADP + H(+). Autorepressed by intramolecular binding of the C-terminus which dissociates following phosphorylation by NEK2. Activated in response to DNA damage. Inhibited by zinc. Protein kinase which plays an important role in the G2/M checkpoint response to DNA damage. Controls degradation of CDC25A by directly phosphorylating it on residues whose phosphorylation is required for BTRC-mediated polyubiquitination and degradation. The sequence is that of Serine/threonine-protein kinase Nek11 (NEK11) from Macaca fascicularis (Crab-eating macaque).